We begin with the raw amino-acid sequence, 279 residues long: HTH-type transcriptional regulator HdfR (279 aa).

The HTH lysR-type domain maps to 1-58; the sequence is MDTELLKTFLEVSRTRHFGRAAESLYLTQSAVSFRIRQLENQLGVNLFTRHRNNIRLT. Positions 18–37 form a DNA-binding region, H-T-H motif; sequence FGRAAESLYLTQSAVSFRIR.

This sequence belongs to the LysR transcriptional regulatory family.

Negatively regulates the transcription of the flagellar master operon flhDC by binding to the upstream region of the operon. This chain is HTH-type transcriptional regulator HdfR, found in Shigella boydii serotype 18 (strain CDC 3083-94 / BS512).